The primary structure comprises 481 residues: 3-isopropylmalate dehydratase large subunit (481 aa).

[4Fe-4S] cluster is bound by residues Cys357, Cys417, and Cys420.

It belongs to the aconitase/IPM isomerase family. LeuC type 1 subfamily. Heterodimer of LeuC and LeuD. [4Fe-4S] cluster is required as a cofactor.

The enzyme catalyses (2R,3S)-3-isopropylmalate = (2S)-2-isopropylmalate. It participates in amino-acid biosynthesis; L-leucine biosynthesis; L-leucine from 3-methyl-2-oxobutanoate: step 2/4. In terms of biological role, catalyzes the isomerization between 2-isopropylmalate and 3-isopropylmalate, via the formation of 2-isopropylmaleate. The protein is 3-isopropylmalate dehydratase large subunit of Maricaulis maris (strain MCS10) (Caulobacter maris).